Consider the following 595-residue polypeptide: Beta-(1--&gt;2)glucan export ATP-binding/permease protein NdvA (595 aa).

The ABC transmembrane type-1 domain maps to 21 to 301 (SLLICSANVM…MSNFINLTIS (281 aa)). 5 consecutive transmembrane segments (helical) span residues 22–42 (LLIC…PILF), 55–75 (IIPT…AYVL), 129–149 (IWLD…VLIP), 152–172 (FNMN…YVLI), and 248–268 (MAST…VAKG). In terms of domain architecture, ABC transporter spans 335–569 (IQFHHVTYKF…GGRFYKLLKA (235 aa)). An ATP-binding site is contributed by 368-375 (GPTGAGKT).

The protein belongs to the ABC transporter superfamily. Beta-(1--&gt;2)glucan exporter (TC 3.A.1.108.1) family. As to quaternary structure, homodimer.

The protein resides in the cell inner membrane. It carries out the reaction [(1-&gt;2)-beta-D-glucosyl](n)(in) + ATP + H2O = [(1-&gt;2)-beta-D-glucosyl](n)(out) + ADP + phosphate + H(+). Functionally, involved in beta-(1--&gt;2)glucan export. Transmembrane domains (TMD) form a pore in the inner membrane and the ATP-binding domain (NBD) is responsible for energy generation. The sequence is that of Beta-(1--&gt;2)glucan export ATP-binding/permease protein NdvA from Bartonella henselae (strain ATCC 49882 / DSM 28221 / CCUG 30454 / Houston 1) (Rochalimaea henselae).